A 78-amino-acid chain; its full sequence is Hainantoxin-XX.2 (78 aa).

The N-terminal stretch at Met1–Ala23 is a signal peptide. Residues Glu24–Arg47 constitute a propeptide that is removed on maturation. Cystine bridges form between Cys49-Cys62, Cys56-Cys66, and Cys61-Cys77.

The protein belongs to the hainantoxin family. 20 subfamily. In terms of tissue distribution, expressed by the venom gland.

The protein localises to the secreted. In terms of biological role, moderately inhibits Kv1.1/KCNA1 and Kv1.2/KCNA2 and weakly inhibits Kv1.3/KCNA3, and Kv2.1/KCNB1 voltage-gated potassium channels. The polypeptide is Hainantoxin-XX.2 (Cyriopagopus hainanus (Chinese bird spider)).